The sequence spans 320 residues: Methenyltetrahydromethanopterin cyclohydrolase (320 aa).

Belongs to the MCH family.

It is found in the cytoplasm. It carries out the reaction 5,10-methenyl-5,6,7,8-tetrahydromethanopterin + H2O = N(5)-formyl-5,6,7,8-tetrahydromethanopterin + H(+). Catalyzes the hydrolysis of methenyl-H(4)MPT(+) to 5-formyl-H(4)MPT. In Methanococcoides burtonii (strain DSM 6242 / NBRC 107633 / OCM 468 / ACE-M), this protein is Methenyltetrahydromethanopterin cyclohydrolase.